Consider the following 358-residue polypeptide: Mitogen-activated protein kinase hog-1 (358 aa).

The Protein kinase domain maps to 20-299 (YSDLQPVGMG…ATEALSHEYL (280 aa)). Residues 26–34 (VGMGAFGLV) and K49 contribute to the ATP site. D141 functions as the Proton acceptor in the catalytic mechanism. Position 171 is a phosphothreonine (T171). The TXY motif lies at 171-173 (TGY). Y173 carries the post-translational modification Phosphotyrosine.

The protein belongs to the protein kinase superfamily. Ser/Thr protein kinase family. MAP kinase subfamily. HOG1 sub-subfamily. Mg(2+) is required as a cofactor. Post-translationally, dually phosphorylated on Thr-171 and Tyr-173, which activates the enzyme. Phosphorylation is induced by fungicides and osmotic stress.

It localises to the cytoplasm. The protein localises to the nucleus. The enzyme catalyses L-seryl-[protein] + ATP = O-phospho-L-seryl-[protein] + ADP + H(+). It carries out the reaction L-threonyl-[protein] + ATP = O-phospho-L-threonyl-[protein] + ADP + H(+). With respect to regulation, activated by tyrosine and threonine phosphorylation. Proline-directed serine/threonine-protein kinase involved in a signal transduction pathway that is activated by changes in the osmolarity of the extracellular environment. Controls osmotic regulation of transcription of target genes. Involved in ion flux-mediated turgor regulation. In Neurospora crassa (strain ATCC 24698 / 74-OR23-1A / CBS 708.71 / DSM 1257 / FGSC 987), this protein is Mitogen-activated protein kinase hog-1 (hog-1).